The following is a 111-amino-acid chain: Histone H2A-Bbd type 1 (111 aa).

This sequence belongs to the histone H2A family. The nucleosome is a histone octamer containing two molecules each of H2A, H2B, H3 and H4 assembled in one H3-H4 heterotetramer and two H2A-H2B heterodimers. Incorporated into nucleosomes during late spermatogenesis. Interacts with H2BC1/TH2B; preferentially dimerizes with H2BC1/TH2B to form nucleosomes. As to expression, highly expressed in adult testis, mainly in spermatocytes.

It localises to the nucleus. The protein localises to the chromosome. Atypical histone H2A which replaces conventional H2A during late spermatogenesis and is involved in the replacement of histones to protamine in male germ cells. Core component of nucleosome: nucleosomes wrap and compact DNA into chromatin, limiting DNA accessibility to the cellular machineries which require DNA as a template. Nucleosomes containing H2AB1 only wrap 130 bp of DNA, compared to 147 bp for classical nucleosomes. In condensing spermatids, the heterodimer between H2AB1 and H2BC1/TH2B is loaded onto the nucleosomes and promotes loading of transition proteins (TNP1 and TNP2) onto the nucleosomes. Inclusion of the H2AB1-H2BC1/TH2B dimer into chromatin opens the nucleosomes, releasing the nucleosomal DNA ends and allowing the invasion of nucleosomes by transition proteins (TNP1 and TNP2). Then, transition proteins drive the recruitment and processing of protamines, which are responsible for histone eviction. This Mus musculus (Mouse) protein is Histone H2A-Bbd type 1 (H2ab1).